Consider the following 276-residue polypeptide: NADPH-dependent 7-cyano-7-deazaguanine reductase (276 aa).

83–85 (IES) is a binding site for substrate. Position 85-86 (85-86 (SK)) interacts with NADPH. Residue cysteine 184 is the Thioimide intermediate of the active site. The active-site Proton donor is aspartate 191. 223-224 (HE) contacts substrate. 252-253 (RG) is a binding site for NADPH.

This sequence belongs to the GTP cyclohydrolase I family. QueF type 2 subfamily. As to quaternary structure, homodimer.

It is found in the cytoplasm. It carries out the reaction 7-aminomethyl-7-carbaguanine + 2 NADP(+) = 7-cyano-7-deazaguanine + 2 NADPH + 3 H(+). The protein operates within tRNA modification; tRNA-queuosine biosynthesis. Its function is as follows. Catalyzes the NADPH-dependent reduction of 7-cyano-7-deazaguanine (preQ0) to 7-aminomethyl-7-deazaguanine (preQ1). The polypeptide is NADPH-dependent 7-cyano-7-deazaguanine reductase (Pseudomonas putida (strain ATCC 700007 / DSM 6899 / JCM 31910 / BCRC 17059 / LMG 24140 / F1)).